Reading from the N-terminus, the 568-residue chain is Calcium-dependent protein kinase 5 (568 aa).

The Protein kinase domain occupies 125 to 379 (EIDRYKLGKG…VEQVLKHRWF (255 aa)). ATP-binding positions include 131-139 (LGKGSYGNV) and lysine 154. The Proton acceptor role is filled by aspartate 245. The J domain autoinhibitory motif motif lies at 400 to 408 (KFKEFHKLC). The segment at 400 to 435 (KFKEFHKLCKIKKLAVTCIAYQLNEKDIGKLKKTFE) is j domain. The J domain EF-hand interaction motif motif lies at 409–418 (KIKKLAVTCI). EF-hand domains lie at 425–460 (KDIG…NDNE), 462–495 (DREL…HSIF), 496–531 (QQDV…SAVQ), and 534–568 (FSKE…GVKE). Ca(2+)-binding residues include aspartate 438, asparagine 440, aspartate 442, glutamate 449, aspartate 473, aspartate 475, asparagine 477, glutamate 484, aspartate 509, aspartate 511, aspartate 513, glutamate 520, aspartate 547, asparagine 549, aspartate 551, and glutamate 558.

This sequence belongs to the protein kinase superfamily. Ser/Thr protein kinase family. CDPK subfamily. The cofactor is Mg(2+). May be palmitoylated. Post-translationally, autophosphorylated in vitro.

It localises to the cytoplasm. Its subcellular location is the cytoplasmic vesicle. It is found in the secretory vesicle. The protein resides in the microneme membrane. The protein localises to the cell membrane. It catalyses the reaction L-seryl-[protein] + ATP = O-phospho-L-seryl-[protein] + ADP + H(+). The enzyme catalyses L-threonyl-[protein] + ATP = O-phospho-L-threonyl-[protein] + ADP + H(+). Its activity is regulated as follows. Activated by calcium. Upon calcium binding to the EF-hand domains, the C-terminus of the junction domain (J domain) undergoes a conformational change which results in the dissociation of the pseudo-substrate inhibitory motif from the catalytic domain. This, in turn, may facilitate the autophosphorylation of the activation loop at Thr-285, which leads to the kinase activation. In terms of biological role, calcium-dependent protein kinase which acts as a sensor and effector of intracellular Ca(2+) levels probably in part downstream of cGMP-activated PKG kinase. Plays a central role in host erythrocytes and hepatocytes infection cycles. During the liver stage, involved in sporozoite motility and thus in sporozoite invasion of host hepatocytes, probably together with CDPK1 and CDPK4. Involved in merosome egress from host hepatocytes, probably together with CDPK4. Required for the release of hepatic merozoites from merosomes in the host blood stream. During the asexual blood stage, required for merozoite egress from host erythrocytes by triggering microneme secretion. Phosphorylates transporter NPT1 at late schizont stage. The polypeptide is Calcium-dependent protein kinase 5 (Plasmodium falciparum (isolate 3D7)).